The sequence spans 202 residues: Small ribosomal subunit protein uS2 (202 aa).

Belongs to the universal ribosomal protein uS2 family.

The sequence is that of Small ribosomal subunit protein uS2 from Methanocorpusculum labreanum (strain ATCC 43576 / DSM 4855 / Z).